Reading from the N-terminus, the 518-residue chain is Protein nucleotidyltransferase YdiU (518 aa).

Residues G109, G111, R112, K131, D143, G144, R194, and R201 each contribute to the ATP site. D270 functions as the Proton acceptor in the catalytic mechanism. Mg(2+) contacts are provided by N271 and D280. D280 lines the ATP pocket.

Belongs to the SELO family. The cofactor is Mg(2+). Mn(2+) serves as cofactor.

It carries out the reaction L-seryl-[protein] + ATP = 3-O-(5'-adenylyl)-L-seryl-[protein] + diphosphate. The catalysed reaction is L-threonyl-[protein] + ATP = 3-O-(5'-adenylyl)-L-threonyl-[protein] + diphosphate. It catalyses the reaction L-tyrosyl-[protein] + ATP = O-(5'-adenylyl)-L-tyrosyl-[protein] + diphosphate. The enzyme catalyses L-histidyl-[protein] + UTP = N(tele)-(5'-uridylyl)-L-histidyl-[protein] + diphosphate. It carries out the reaction L-seryl-[protein] + UTP = O-(5'-uridylyl)-L-seryl-[protein] + diphosphate. The catalysed reaction is L-tyrosyl-[protein] + UTP = O-(5'-uridylyl)-L-tyrosyl-[protein] + diphosphate. Functionally, nucleotidyltransferase involved in the post-translational modification of proteins. It can catalyze the addition of adenosine monophosphate (AMP) or uridine monophosphate (UMP) to a protein, resulting in modifications known as AMPylation and UMPylation. The sequence is that of Protein nucleotidyltransferase YdiU from Paraburkholderia xenovorans (strain LB400).